A 571-amino-acid polypeptide reads, in one-letter code: E3 ubiquitin-protein ligase RNF168 (571 aa).

The RING-type zinc-finger motif lies at 16–55 (CGICMEILVEPVTLPCNHTLCKPCFQSTVEKASLCCPFCR). A Phosphoserine modification is found at S70. An LR motif 1 motif is present at residues 110-128 (LSKPGELRREYEEEISKVA). A Phosphoserine modification is found at S134. The UMI motif motif lies at 143 to 151 (EEYIQRLLA). Disordered stretches follow at residues 151 to 174 (AEEEEEEKRQAEKRRRAMEEQLKS) and 191 to 292 (EGSI…GADS). An MIU motif 1 motif is present at residues 168 to 191 (MEEQLKSDEELARKLSIDINNFCE). A Phosphoserine modification is found at S197. Basic and acidic residues predominate over residues 202–214 (RKSDPVTPKSEKK). Residue K210 forms a Glycyl lysine isopeptide (Lys-Gly) (interchain with G-Cter in SUMO2) linkage. Positions 231–242 (PKSQFGSASHSE) are enriched in polar residues. Positions 243-263 (AVQEVRKDSVSKDIDSSDRKS) are enriched in basic and acidic residues. Residue T362 is modified to Phosphothreonine. Disordered regions lie at residues 390 to 422 (NQESSFEAVKDPCFSAKRRKVSPESSPDQEETE) and 459 to 560 (KEQM…ISQK). S411, S414, and S415 each carry phosphoserine. An MIU motif 2 motif is present at residues 439 to 462 (RHKQEEQDRLLALQLQKEVDKEQM). Positions 466–477 (RQKGSPDEYHLR) match the LR motif 2 motif. The residue at position 470 (S470) is a Phosphoserine. Residues 508–519 (PTPERGSRDKNR) show a composition bias toward basic and acidic residues. Composition is skewed to polar residues over residues 520–530 (QVSLKMQLKQS) and 549–560 (SAHSLQPSISQK). K528 is covalently cross-linked (Glycyl lysine isopeptide (Lys-Gly) (interchain with G-Cter in SUMO2)).

This sequence belongs to the RNF168 family. Monomer. Interacts with UBE2N/UBC13. Post-translationally, sumoylated with SUMO1 by PIAS4 in response to double-strand breaks (DSBs). In terms of processing, ubiquitinated.

It localises to the nucleus. It carries out the reaction S-ubiquitinyl-[E2 ubiquitin-conjugating enzyme]-L-cysteine + [acceptor protein]-L-lysine = [E2 ubiquitin-conjugating enzyme]-L-cysteine + N(6)-ubiquitinyl-[acceptor protein]-L-lysine.. It functions in the pathway protein modification; protein ubiquitination. E3 ubiquitin-protein ligase required for accumulation of repair proteins to sites of DNA damage. Acts with UBE2N/UBC13 to amplify the RNF8-dependent histone ubiquitination. Recruited to sites of DNA damage at double-strand breaks (DSBs) by binding to ubiquitinated histone H2A and H2AX and amplifies the RNF8-dependent H2A ubiquitination, promoting the formation of 'Lys-63'-linked ubiquitin conjugates. This leads to concentrate ubiquitinated histones H2A and H2AX at DNA lesions to the threshold required for recruitment of TP53BP1 and BRCA1. Also recruited at DNA interstrand cross-links (ICLs) sites and promotes accumulation of 'Lys-63'-linked ubiquitination of histones H2A and H2AX, leading to recruitment of FAAP20/C1orf86 and Fanconi anemia (FA) complex, followed by interstrand cross-link repair. H2A ubiquitination also mediates the ATM-dependent transcriptional silencing at regions flanking DSBs in cis, a mechanism to avoid collision between transcription and repair intermediates. Also involved in class switch recombination in immune system, via its role in regulation of DSBs repair. Following DNA damage, promotes the ubiquitination and degradation of JMJD2A/KDM4A in collaboration with RNF8, leading to unmask H4K20me2 mark and promote the recruitment of TP53BP1 at DNA damage sites. Not able to initiate 'Lys-63'-linked ubiquitination in vitro; possibly due to partial occlusion of the UBE2N/UBC13-binding region. Catalyzes monoubiquitination of 'Lys-13' and 'Lys-15' of nucleosomal histone H2A (H2AK13Ub and H2AK15Ub, respectively). The polypeptide is E3 ubiquitin-protein ligase RNF168 (Homo sapiens (Human)).